A 204-amino-acid polypeptide reads, in one-letter code: Glycerol-3-phosphate acyltransferase (204 aa).

A run of 5 helical transmembrane segments spans residues 8 to 28, 53 to 73, 81 to 101, 116 to 136, and 155 to 175; these read MLVFAYLLGSINSAIIVCYIF, VPAIITLAFDILKGLVPVVLA, FITACTALYAILGHIFPIFFG, FGFSWILGLIFVVTWLCVAVI, and VIFTSDLQVATPFLIIAIIIL.

It belongs to the PlsY family. Probably interacts with PlsX.

Its subcellular location is the cell inner membrane. It carries out the reaction an acyl phosphate + sn-glycerol 3-phosphate = a 1-acyl-sn-glycero-3-phosphate + phosphate. It participates in lipid metabolism; phospholipid metabolism. Catalyzes the transfer of an acyl group from acyl-phosphate (acyl-PO(4)) to glycerol-3-phosphate (G3P) to form lysophosphatidic acid (LPA). This enzyme utilizes acyl-phosphate as fatty acyl donor, but not acyl-CoA or acyl-ACP. This is Glycerol-3-phosphate acyltransferase from Francisella philomiragia subsp. philomiragia (strain ATCC 25017 / CCUG 19701 / FSC 153 / O#319-036).